We begin with the raw amino-acid sequence, 550 residues long: Arginine--tRNA ligase (550 aa).

A 'HIGH' region motif is present at residues 123–133 (ANPTGYLHIAH).

Belongs to the class-I aminoacyl-tRNA synthetase family. In terms of assembly, monomer.

Its subcellular location is the cytoplasm. It carries out the reaction tRNA(Arg) + L-arginine + ATP = L-arginyl-tRNA(Arg) + AMP + diphosphate. The polypeptide is Arginine--tRNA ligase (Ureaplasma parvum serovar 3 (strain ATCC 27815 / 27 / NCTC 11736)).